The primary structure comprises 627 residues: Lipid-A-disaccharide synthase (627 aa).

A unknown region spans residues 1–224; it reads MFPLYLVRLL…IYKKSRLSEF (224 aa). Positions 225-627 are lipid-A-disaccharide synthase; that stretch reads HNPSYFISAG…YVQKNVRPSF (403 aa).

In the C-terminal section; belongs to the LpxB family.

It catalyses the reaction a lipid X + a UDP-2-N,3-O-bis[(3R)-3-hydroxyacyl]-alpha-D-glucosamine = a lipid A disaccharide + UDP + H(+). The protein operates within bacterial outer membrane biogenesis; LPS lipid A biosynthesis. Functionally, condensation of UDP-2,3-diacylglucosamine and 2,3-diacylglucosamine-1-phosphate to form lipid A disaccharide, a precursor of lipid A, a phosphorylated glycolipid that anchors the lipopolysaccharide to the outer membrane of the cell. The sequence is that of Lipid-A-disaccharide synthase (lpxB) from Chlamydia abortus (strain DSM 27085 / S26/3) (Chlamydophila abortus).